Reading from the N-terminus, the 372-residue chain is Flagellar P-ring protein (372 aa).

A signal peptide spans Met-1 to Ala-26.

It belongs to the FlgI family. The basal body constitutes a major portion of the flagellar organelle and consists of four rings (L,P,S, and M) mounted on a central rod.

The protein resides in the periplasm. The protein localises to the bacterial flagellum basal body. Its function is as follows. Assembles around the rod to form the L-ring and probably protects the motor/basal body from shearing forces during rotation. This Xanthomonas axonopodis pv. citri (strain 306) protein is Flagellar P-ring protein.